The chain runs to 170 residues: Photosystem I assembly protein Ycf3 (170 aa).

TPR repeat units follow at residues 35–68 (AFTY…EIDP), 72–105 (SYIL…NPFL), and 120–153 (GEQA…TPGN).

It belongs to the Ycf3 family.

It is found in the plastid. The protein resides in the chloroplast thylakoid membrane. In terms of biological role, essential for the assembly of the photosystem I (PSI) complex. May act as a chaperone-like factor to guide the assembly of the PSI subunits. This is Photosystem I assembly protein Ycf3 from Oryza nivara (Indian wild rice).